The sequence spans 689 residues: UvrABC system protein C (689 aa).

Residues 1-19 (MTSDSSDTAKQIGSGQPSG) are compositionally biased toward polar residues. The interval 1-59 (MTSDSSDTAKQIGSGQPSGSPADMRRRDGVAPEQEVDPASLETDEDDEARLPDLPDEPV) is disordered. Residues 42–59 (ETDEDDEARLPDLPDEPV) are compositionally biased toward acidic residues. The region spanning 83–161 (TSPGVYRMMN…IKQLRPRFNV (79 aa)) is the GIY-YIG domain. A UVR domain is found at 271–306 (RAVKEDLARAMEQAAADLAFERAALYRDRLAALSAI).

Belongs to the UvrC family. In terms of assembly, interacts with UvrB in an incision complex.

The protein resides in the cytoplasm. In terms of biological role, the UvrABC repair system catalyzes the recognition and processing of DNA lesions. UvrC both incises the 5' and 3' sides of the lesion. The N-terminal half is responsible for the 3' incision and the C-terminal half is responsible for the 5' incision. This is UvrABC system protein C from Nitrobacter winogradskyi (strain ATCC 25391 / DSM 10237 / CIP 104748 / NCIMB 11846 / Nb-255).